A 155-amino-acid polypeptide reads, in one-letter code: Endoribonuclease YbeY (155 aa).

Residues H114, H118, and H124 each contribute to the Zn(2+) site.

Belongs to the endoribonuclease YbeY family. Zn(2+) is required as a cofactor.

Its subcellular location is the cytoplasm. Its function is as follows. Single strand-specific metallo-endoribonuclease involved in late-stage 70S ribosome quality control and in maturation of the 3' terminus of the 16S rRNA. The sequence is that of Endoribonuclease YbeY from Shigella flexneri serotype 5b (strain 8401).